A 313-amino-acid chain; its full sequence is MKKKLLAGAITLLSVATLAACSKGSEGADLISMKGDVITEHQFYEQVKNNPSAQQVLLNMTIQKVFEKQYGSELDDKEVDDTIAEEKKQYGENYQRVLSQAGMTLETRKAQIRTSKLVELAVKKVAEAELTDEAYKKAFDEYTPDVTAQIIRLNNEDKAKEVLEKAKAEGADFAQLAKDNSTDEKTKENGGEITFDSASTEVPEQVKKAAFALDVDGVSDVITATGTQAYSSQYYIVKLTKKTEKSSNIDDYKEKLKTVILTQKQNDSTFVQSIIGKELQAANIKVKDQAFQNIFTQYIGGGDSSSSSSTSNE.

A signal peptide spans 1–20 (MKKKLLAGAITLLSVATLAA). Cysteine 21 carries the N-palmitoyl cysteine lipid modification. A lipid anchor (S-diacylglycerol cysteine) is attached at cysteine 21. The region spanning 143–241 (TPDVTAQIIR…SQYYIVKLTK (99 aa)) is the PpiC domain.

This sequence belongs to the PrsA family.

It is found in the cell membrane. It catalyses the reaction [protein]-peptidylproline (omega=180) = [protein]-peptidylproline (omega=0). Plays a major role in protein secretion by helping the post-translocational extracellular folding of several secreted proteins. This chain is Foldase protein PrsA, found in Streptococcus pneumoniae (strain ATCC BAA-255 / R6).